Consider the following 461-residue polypeptide: Glycogen synthase (461 aa).

Lysine 15 is an ADP-alpha-D-glucose binding site.

This sequence belongs to the glycosyltransferase 1 family. Bacterial/plant glycogen synthase subfamily.

The catalysed reaction is [(1-&gt;4)-alpha-D-glucosyl](n) + ADP-alpha-D-glucose = [(1-&gt;4)-alpha-D-glucosyl](n+1) + ADP + H(+). Its pathway is glycan biosynthesis; glycogen biosynthesis. Synthesizes alpha-1,4-glucan chains using ADP-glucose. This Fusobacterium nucleatum subsp. nucleatum (strain ATCC 25586 / DSM 15643 / BCRC 10681 / CIP 101130 / JCM 8532 / KCTC 2640 / LMG 13131 / VPI 4355) protein is Glycogen synthase.